We begin with the raw amino-acid sequence, 457 residues long: Transmembrane protein 143 (457 aa).

A run of 2 helical transmembrane segments spans residues 264–284 and 285–305; these read ILNV…GMVV and LSDL…FMGL. Ser316 carries the phosphoserine modification. Residues 429 to 439 show a composition bias toward polar residues; it reads LSSPKSAPSDD. Residues 429-457 form a disordered region; sequence LSSPKSAPSDDNSLEKPLGPAQPSHLVGN.

The protein resides in the membrane. This chain is Transmembrane protein 143 (TMEM143), found in Bos taurus (Bovine).